A 219-amino-acid polypeptide reads, in one-letter code: MSLIDPTQTSISDLRRDYRQQALLETEVNANPILQFQSWFEQAVQAELPEPNAMTLATVSADSQPSARMVLLKGFDQQGFIFYTNYLSRKGQDLAQRPWAALVFWWAELERQVRIEGKVVKVSDSETKAYFESRPRGSQLGAWASDQSQVIGDRDILDQRLQALEQKYQNQPIPRPPHWGGYRVTPHLIEFWQGRTSRLHDRLCYRYSDQEWILERLSP.

Substrate is bound by residues 15–18 (RRDY) and Lys-73. FMN-binding positions include 68-73 (RMVLLK), 83-84 (YT), Arg-89, Lys-90, and Gln-112. Substrate contacts are provided by Tyr-130, Arg-134, and Ser-138. FMN-binding positions include 147–148 (QS) and Trp-192. 198 to 200 (RLH) provides a ligand contact to substrate. Arg-202 serves as a coordination point for FMN.

This sequence belongs to the pyridoxamine 5'-phosphate oxidase family. In terms of assembly, homodimer. It depends on FMN as a cofactor.

It carries out the reaction pyridoxamine 5'-phosphate + O2 + H2O = pyridoxal 5'-phosphate + H2O2 + NH4(+). It catalyses the reaction pyridoxine 5'-phosphate + O2 = pyridoxal 5'-phosphate + H2O2. It functions in the pathway cofactor metabolism; pyridoxal 5'-phosphate salvage; pyridoxal 5'-phosphate from pyridoxamine 5'-phosphate: step 1/1. It participates in cofactor metabolism; pyridoxal 5'-phosphate salvage; pyridoxal 5'-phosphate from pyridoxine 5'-phosphate: step 1/1. Catalyzes the oxidation of either pyridoxine 5'-phosphate (PNP) or pyridoxamine 5'-phosphate (PMP) into pyridoxal 5'-phosphate (PLP). The protein is Pyridoxine/pyridoxamine 5'-phosphate oxidase of Acaryochloris marina (strain MBIC 11017).